The following is a 185-amino-acid chain: Ribosome-recycling factor (185 aa).

The protein belongs to the RRF family.

It is found in the cytoplasm. Functionally, responsible for the release of ribosomes from messenger RNA at the termination of protein biosynthesis. May increase the efficiency of translation by recycling ribosomes from one round of translation to another. The sequence is that of Ribosome-recycling factor from Thermosipho melanesiensis (strain DSM 12029 / CIP 104789 / BI429).